The chain runs to 283 residues: MTESKSEGTAVAAPTPEEVRQMYDDFTDPFARIWGENLHFGYWEDAGADVSVDDATDRLTDEMIALLDVRSGDRVLDVGCGIGKPAVRLATARDVRVTGISISRPQVNQANARATAAGLANRVTFSYADAMDLPFEDASFDAVWALESLHHMPDRGRALREMARVLRPGGTVAIADFVLLAPVEGAKKEAVDAFRAGGGVLSLGGIDEYESDVRQAELVVTSTVDISAQARPSLVKTAEAFENARSQVEPFMGAEGLDRMIATFRGLAEVPEAGYVLIGARKP.

Residues Ser101, Gln106, 129-130 (DA), Leu146, and His151 contribute to the S-adenosyl-L-methionine site.

The protein belongs to the methyltransferase superfamily. In terms of assembly, monomer.

It carries out the reaction 4'-demethylrebeccamycin + S-adenosyl-L-methionine = rebeccamycin + S-adenosyl-L-homocysteine + H(+). Glycosyl O-methyltransferase that catalyzes the final step in the biosynthesis of rebeccamycin, an indolocarbazole alkaloid that inhibits topoisomerase 1. Has broad substrate specificity and functions as glycosyl O-methyltransferase on a number of rebeccamycin analogs. This chain is Demethylrebeccamycin-D-glucose O-methyltransferase (rebM), found in Lentzea aerocolonigenes (Lechevalieria aerocolonigenes).